The sequence spans 76 residues: UPF0291 protein BT9727_1737 (76 aa).

It belongs to the UPF0291 family.

The protein localises to the cytoplasm. This is UPF0291 protein BT9727_1737 from Bacillus thuringiensis subsp. konkukian (strain 97-27).